The following is a 310-amino-acid chain: Lipoyl synthase (310 aa).

C51, C56, C62, C77, C81, C84, and S290 together coordinate [4Fe-4S] cluster. The Radical SAM core domain occupies 63–280 (WSRKTATYLA…RRVGESLGLF (218 aa)).

It belongs to the radical SAM superfamily. Lipoyl synthase family. [4Fe-4S] cluster serves as cofactor.

It localises to the cytoplasm. It carries out the reaction [[Fe-S] cluster scaffold protein carrying a second [4Fe-4S](2+) cluster] + N(6)-octanoyl-L-lysyl-[protein] + 2 oxidized [2Fe-2S]-[ferredoxin] + 2 S-adenosyl-L-methionine + 4 H(+) = [[Fe-S] cluster scaffold protein] + N(6)-[(R)-dihydrolipoyl]-L-lysyl-[protein] + 4 Fe(3+) + 2 hydrogen sulfide + 2 5'-deoxyadenosine + 2 L-methionine + 2 reduced [2Fe-2S]-[ferredoxin]. The protein operates within protein modification; protein lipoylation via endogenous pathway; protein N(6)-(lipoyl)lysine from octanoyl-[acyl-carrier-protein]: step 2/2. Its function is as follows. Catalyzes the radical-mediated insertion of two sulfur atoms into the C-6 and C-8 positions of the octanoyl moiety bound to the lipoyl domains of lipoate-dependent enzymes, thereby converting the octanoylated domains into lipoylated derivatives. The chain is Lipoyl synthase from Chlamydia abortus (strain DSM 27085 / S26/3) (Chlamydophila abortus).